The chain runs to 432 residues: Adenylosuccinate synthetase (432 aa).

Residues 12–18 and 40–42 each bind GTP; these read GDEGKGK and GHT. The active-site Proton acceptor is D13. The Mg(2+) site is built by D13 and G40. Residues 13-16, 38-41, T132, R146, Q226, T241, and R305 contribute to the IMP site; these read DEGK and NAGH. H41 (proton donor) is an active-site residue. 301 to 307 serves as a coordination point for substrate; the sequence is VVTGRKR. GTP contacts are provided by residues R307, 333-335, and 415-417; these read KLD and STS.

The protein belongs to the adenylosuccinate synthetase family. As to quaternary structure, homodimer. Mg(2+) is required as a cofactor.

The protein localises to the cytoplasm. It carries out the reaction IMP + L-aspartate + GTP = N(6)-(1,2-dicarboxyethyl)-AMP + GDP + phosphate + 2 H(+). Its pathway is purine metabolism; AMP biosynthesis via de novo pathway; AMP from IMP: step 1/2. Functionally, plays an important role in the de novo pathway of purine nucleotide biosynthesis. Catalyzes the first committed step in the biosynthesis of AMP from IMP. The polypeptide is Adenylosuccinate synthetase (Rhizobium johnstonii (strain DSM 114642 / LMG 32736 / 3841) (Rhizobium leguminosarum bv. viciae)).